Here is a 488-residue protein sequence, read N- to C-terminus: MGRAFVYVILGGGVAAGYAALEFTRRGVSDGELCIISEEPVAPYERPALSKGFLLPEAPARLPSFHTCVGANDEKLTPKWYKDHGIELVLGTRVKSVDVRRKTLLSSTGETISYKFLIIATGARALKLEEFGVEGSDAENVCYLRDLADANRLATVIQSSSNGNAVVIGGGYIGMECAASLVINKINVTMVFPEAHCMARLFTPKIASLYEDYYRAKGVKFIKGTVLTSFEFDSNKKVTAVNLKDGSHLPADLVVVGIGIRPNTSLFEGQLTIEKGGIKVNSRMQSSDSSVYAIGDVATFPVKLFGEMRRLEHVDSARKSARHAVSAIMDPIKTGDFDYLPFFYSRVFAFSWQFYGDPTGDVVHFGEYEDGKSFGAYWVKKGHLVGSFLEGGTKEEYETISKATQLKPAVTIDLEELEREGLGFAHTVVSQQKVPEVKDIPSAEMVKQSASVVMIKKPLYVWHAATGVVVAASVAAFAFWYGRRRRRW.

At 1-3 (MGR) the chain is on the cytoplasmic side. A helical transmembrane segment spans residues 4 to 24 (AFVYVILGGGVAAGYAALEFT). Residues 12–15 (GGVA), E39, R46, K51, and 145–146 (RD) each bind FAD. Residues 25–458 (RRGVSDGELC…SASVVMIKKP (434 aa)) lie on the Peroxisomal side of the membrane. NAD(+) contacts are provided by residues 170–176 (GGYIGME), E194, R200, and G259. 172–176 (YIGME) contributes to the NADP(+) binding site. NADP(+)-binding residues include R200 and G259. An FAD-binding site is contributed by D296. An NAD(+)-binding site is contributed by 312–313 (EH). 312 to 313 (EH) is a binding site for NADP(+). V314 is a binding site for FAD. Position 318 (R318) interacts with L-ascorbate. Residue Y344 participates in FAD binding. Position 344 (Y344) interacts with NAD(+). Y344 contacts NADP(+). R346 provides a ligand contact to L-ascorbate. The helical transmembrane segment at 459–479 (LYVWHAATGVVVAASVAAFAF) threads the bilayer. Residues 480–488 (WYGRRRRRW) lie on the Cytoplasmic side of the membrane.

It belongs to the FAD-dependent oxidoreductase family. The cofactor is FAD.

Its subcellular location is the peroxisome membrane. It catalyses the reaction 2 monodehydro-L-ascorbate radical + NADH + H(+) = 2 L-ascorbate + NAD(+). Catalyzes the conversion of monodehydroascorbate to ascorbate, oxidizing NADH in the process. Involved in the detoxification of H(2)O(2) that escapes the peroxisome and causes oxidative damage to oil bodies. The chain is Monodehydroascorbate reductase 4, peroxisomal from Arabidopsis thaliana (Mouse-ear cress).